A 340-amino-acid chain; its full sequence is Protein-glutamate methylesterase/protein-glutamine glutaminase 1 (340 aa).

In terms of domain architecture, Response regulatory spans 5–122 (KLFIVDDSAL…KVVSELKEKI (118 aa)). Aspartate 56 carries the post-translational modification 4-aspartylphosphate. A CheB-type methylesterase domain is found at 148–340 (GKNGRQLVVI…AIAEEIAANI (193 aa)). Residues serine 160, histidine 187, and aspartate 285 contribute to the active site.

Belongs to the CheB family. Phosphorylated by CheA. Phosphorylation of the N-terminal regulatory domain activates the methylesterase activity.

The protein resides in the cytoplasm. The catalysed reaction is [protein]-L-glutamate 5-O-methyl ester + H2O = L-glutamyl-[protein] + methanol + H(+). The enzyme catalyses L-glutaminyl-[protein] + H2O = L-glutamyl-[protein] + NH4(+). Involved in chemotaxis. Part of a chemotaxis signal transduction system that modulates chemotaxis in response to various stimuli. Catalyzes the demethylation of specific methylglutamate residues introduced into the chemoreceptors (methyl-accepting chemotaxis proteins or MCP) by CheR. Also mediates the irreversible deamidation of specific glutamine residues to glutamic acid. The polypeptide is Protein-glutamate methylesterase/protein-glutamine glutaminase 1 (Carboxydothermus hydrogenoformans (strain ATCC BAA-161 / DSM 6008 / Z-2901)).